The chain runs to 383 residues: 23S rRNA (uracil(747)-C(5))-methyltransferase RlmC (383 aa).

Cys3, Cys11, Cys14, and Cys89 together coordinate [4Fe-4S] cluster. The S-adenosyl-L-methionine site is built by Gln214, Phe243, Glu270, and Asn315. Cys342 acts as the Nucleophile in catalysis.

The protein belongs to the class I-like SAM-binding methyltransferase superfamily. RNA M5U methyltransferase family. RlmC subfamily.

It catalyses the reaction uridine(747) in 23S rRNA + S-adenosyl-L-methionine = 5-methyluridine(747) in 23S rRNA + S-adenosyl-L-homocysteine + H(+). Its function is as follows. Catalyzes the formation of 5-methyl-uridine at position 747 (m5U747) in 23S rRNA. The sequence is that of 23S rRNA (uracil(747)-C(5))-methyltransferase RlmC from Actinobacillus succinogenes (strain ATCC 55618 / DSM 22257 / CCUG 43843 / 130Z).